Consider the following 561-residue polypeptide: Potassium-transporting ATPase potassium-binding subunit (561 aa).

10 helical membrane passes run 4–24, 65–85, 133–153, 177–197, 253–273, 285–305, 380–400, 417–437, 484–504, and 528–548; these read IVMQ…PLGI, AVSV…VLML, IGLT…LFAV, LYIL…QGVV, FTNL…VVMF, AIMT…TISE, GLYG…LLVG, MVCL…AVAV, MVGA…ALYL, and FIGL…LPAL.

It belongs to the KdpA family. In terms of assembly, the system is composed of three essential subunits: KdpA, KdpB and KdpC.

It is found in the cell membrane. Part of the high-affinity ATP-driven potassium transport (or Kdp) system, which catalyzes the hydrolysis of ATP coupled with the electrogenic transport of potassium into the cytoplasm. This subunit binds the extracellular potassium ions and delivers the ions to the membrane domain of KdpB through an intramembrane tunnel. The sequence is that of Potassium-transporting ATPase potassium-binding subunit from Listeria monocytogenes serotype 4b (strain F2365).